We begin with the raw amino-acid sequence, 171 residues long: MDLKTLIREIPDFPKPGILFRDYTTVLKDPQGWRYSIDRLTELIKPLEPTAIVGIESRGFILGAPLAYQLGLGFVPVRKPGKLPADTHSVEYELEYGSDRLEIHQDALAPGDRVVVVDDLIATGGTASATATLIDRCSATLAGFAFVIELEGLNGRDRLPEVPIISLVSYD.

This sequence belongs to the purine/pyrimidine phosphoribosyltransferase family. As to quaternary structure, homodimer.

It localises to the cytoplasm. The enzyme catalyses AMP + diphosphate = 5-phospho-alpha-D-ribose 1-diphosphate + adenine. It participates in purine metabolism; AMP biosynthesis via salvage pathway; AMP from adenine: step 1/1. Functionally, catalyzes a salvage reaction resulting in the formation of AMP, that is energically less costly than de novo synthesis. This Synechococcus sp. (strain ATCC 27144 / PCC 6301 / SAUG 1402/1) (Anacystis nidulans) protein is Adenine phosphoribosyltransferase.